The primary structure comprises 424 residues: Otefin (424 aa).

Residues 1–30 (MADVDDFDSLSNAELRAKMLAQGLPNIPVT) enclose the LEM domain. The required for binding to Med and germline stem cell maintenance stretch occupies residues 1 to 50 (MADVDDFDSLSNAELRAKMLAQGLPNIPVTDSSRKVLVKRLRASIGGQAS). The disordered stretch occupies residues 42-186 (RASIGGQASP…SSKRADREEN (145 aa)). Ser-44, Ser-50, and Ser-54 each carry phosphoserine. Position 63 is a phosphothreonine (Thr-63). The span at 65–80 (APAPGAPSAPAAASTP) shows a compositional bias: low complexity. The Nuclear localization signal signature appears at 92 to 99 (ATKARRTI). A compositionally biased stretch (basic and acidic residues) spans 103–133 (EAKEPVRRLPEEAIRRRPDEADRLRSEEPVA). A Phosphoserine modification is found at Ser-152. The segment covering 157-170 (SERKVVEPLRKPET) has biased composition (basic and acidic residues). A phosphoserine mark is found at Ser-192 and Ser-198. The interval 259–278 (PSVPSARAQTTSSTRSYDYA) is disordered. Residues 262–274 (PSARAQTTSSTRS) show a composition bias toward low complexity. The tract at residues 271 to 400 (STRSYDYASN…NRWLNSLEQK (130 aa)) is required for binding to Med. A Phosphoserine modification is found at Ser-321. Thr-324 carries the phosphothreonine modification. Ser-326 carries the post-translational modification Phosphoserine. Position 358 is a phosphothreonine (Thr-358). Ser-378 and Ser-385 each carry phosphoserine. The segment at 400–424 (KYHIKSKLFIVLLVLLLIGVYYIFY) is essential for nuclear membrane localization and germline stem cell maintenance. An essential for nuclear membrane localization region spans residues 406 to 424 (KLFIVLLVLLLIGVYYIFY).

As to quaternary structure, interacts with Med. Interacts with Lam. Interacts with aurA, alphaTub84B, gammaTub23C and gammaTub37C. Interacts with Nemp. Phosphorylation at Thr-63 by aurA may be required for exit from mitosis. May be phosphorylated by Cdk1 and Pka-C1. As to expression, expressed in all cell types of the germarium and testis. Expressed in nurse cells, follicle cells and oocytes.

It is found in the nucleus inner membrane. The protein resides in the nucleus. Its subcellular location is the nucleoplasm. It localises to the cytoplasm. The protein localises to the chromosome. It is found in the cytoskeleton. The protein resides in the spindle pole. Its subcellular location is the microtubule organizing center. It localises to the centrosome. In terms of biological role, inner nuclear membrane protein. Involved in the attachment of membrane vesicles to chromatin during nuclear assembly, and is probably required for centrosome maturation and cell cycle progression during mitosis. Essential for differentiation of certain tissues and the maintenance of progenitor cell populations. Required for the differentiation and maintenance of male and female germline stem cells (GSCs), as well as the maintenance of somatic cells in the GSC niche. This role is likely to be independent of the BMP (Dpp) pathway that negatively regulates bam transcription during GSC differentiation. During development, plays essential and redundant functions with the other LEM domain proteins; bocks and MAN1. Also has a redundant but important role with bocks during larval development. This chain is Otefin, found in Drosophila melanogaster (Fruit fly).